Here is a 259-residue protein sequence, read N- to C-terminus: NAD kinase (259 aa).

Asp-49 functions as the Proton acceptor in the catalytic mechanism. NAD(+) is bound by residues 49 to 50 (DG), Arg-54, 118 to 119 (NE), Asp-148, Ala-156, 159 to 164 (TAYNYS), and Ala-183.

Belongs to the NAD kinase family. It depends on a divalent metal cation as a cofactor.

It is found in the cytoplasm. It catalyses the reaction NAD(+) + ATP = ADP + NADP(+) + H(+). Its function is as follows. Involved in the regulation of the intracellular balance of NAD and NADP, and is a key enzyme in the biosynthesis of NADP. Catalyzes specifically the phosphorylation on 2'-hydroxyl of the adenosine moiety of NAD to yield NADP. This Xylella fastidiosa (strain Temecula1 / ATCC 700964) protein is NAD kinase.